We begin with the raw amino-acid sequence, 1077 residues long: Disheveled-associated activator of morphogenesis 1 (1077 aa).

Residue Ser34 is modified to Phosphoserine. The GBD/FH3 domain occupies 45–420; the sequence is LPMPPVEELD…QIVIQNDKGQ (376 aa). The stretch at 437 to 526 forms a coiled coil; that stretch reads RMLVNENEVK…ELNRRAVCAA (90 aa). Disordered stretches follow at residues 457–478 and 526–596; these read KEHNELQQKLEKKERECDAKTQ and AVPG…PVSL. The 72-residue stretch at 528-599 folds into the FH1 domain; the sequence is PGGPSPGAPG…PGAPVSLTLK (72 aa). 2 stretches are compositionally biased toward pro residues: residues 530–539 and 549–592; these read GPSPGAPGGP and LPPP…PPGA. The region spanning 600–1008 is the FH2 domain; the sequence is KKNIPQPTNA…EERRARLEAQ (409 aa). An actin-binding region spans residues 693–702; that stretch reads QNCNILLSRL. Residues 1007–1026 show a composition bias toward basic and acidic residues; that stretch reads AQLKEQRERERKVRKAKESS. 2 disordered regions span residues 1007 to 1033 and 1056 to 1077; these read AQLKEQRERERKVRKAKESSEESGEFD and RKRISNQVTDSSRERPITKLNF. Phosphoserine is present on residues Ser1026 and Ser1029. The 32-residue stretch at 1026 to 1057 folds into the DAD domain; that stretch reads SEESGEFDDLVSALRSGEVFDKDLSKLKRNRK. Positions 1066 to 1077 are enriched in basic and acidic residues; sequence SSRERPITKLNF.

The protein belongs to the formin homology family. Interacts with CIP4, FNBP1 and FNBP1L. Interacts with the SH3 domains of Abl, BTK, endophilin, spectrin and SRC. Binds specifically to GTP-bound CDC42 and RHOA. Interacts with INTU; INTU mediates the indirect interaction between DAAM1 and NPHP4. Interacts (via coiled coil domain) with KANK1 (via coiled coil domain). As to expression, in early embryogenesis, expressed in embryonic and extraembryonic ectoderm. In later stages of gastrulation, expressed also in somites and ribs and posterior vertebrae of developing skeletal system. During organogenesis, expressed in CNS, PNS, stomach, liver and limb bud.

The protein resides in the cytoplasm. It localises to the cytoskeleton. Its subcellular location is the cilium basal body. Binds to disheveled (Dvl) and Rho, and mediates Wnt-induced Dvl-Rho complex formation. May play a role as a scaffolding protein to recruit Rho-GDP and Rho-GEF, thereby enhancing Rho-GTP formation. Can direct nucleation and elongation of new actin filaments. Involved in building functional cilia. Involved in the organization of the subapical actin network in multiciliated epithelial cells. Together with DAAM2, required for myocardial maturation and sarcomere assembly. During cell division, may regulate RHOA activation that signals spindle orientation and chromosomal segregation. The sequence is that of Disheveled-associated activator of morphogenesis 1 (Daam1) from Mus musculus (Mouse).